The following is a 350-amino-acid chain: Dihydroorotase (350 aa).

Residues histidine 17 and histidine 19 each coordinate Zn(2+). Substrate is bound by residues 19-21 (HLR) and asparagine 45. Zn(2+)-binding residues include lysine 103, histidine 140, and histidine 178. Lysine 103 carries the post-translational modification N6-carboxylysine. Residue histidine 140 coordinates substrate. Leucine 224 is a substrate binding site. Position 252 (aspartate 252) interacts with Zn(2+). Aspartate 252 is an active-site residue. Substrate-binding residues include histidine 256 and alanine 268.

Belongs to the metallo-dependent hydrolases superfamily. DHOase family. Class II DHOase subfamily. As to quaternary structure, homodimer. Zn(2+) is required as a cofactor.

The catalysed reaction is (S)-dihydroorotate + H2O = N-carbamoyl-L-aspartate + H(+). Its pathway is pyrimidine metabolism; UMP biosynthesis via de novo pathway; (S)-dihydroorotate from bicarbonate: step 3/3. In terms of biological role, catalyzes the reversible cyclization of carbamoyl aspartate to dihydroorotate. The protein is Dihydroorotase of Buchnera aphidicola subsp. Acyrthosiphon pisum (strain 5A).